The primary structure comprises 637 residues: Galactofuranosyltransferase GlfT2 (637 aa).

Residues arginine 171, glutamine 200, asparagine 229, and aspartate 256 each coordinate UDP-alpha-D-galactofuranose. Positions 256 and 258 each coordinate Mn(2+). The Proton acceptor role is filled by aspartate 372. Histidine 396 provides a ligand contact to Mn(2+).

Belongs to the glycosyltransferase 2 family. In terms of assembly, homotetramer. Mn(2+) is required as a cofactor. Mg(2+) serves as cofactor.

Its subcellular location is the cell membrane. It carries out the reaction beta-D-galactofuranosyl-(1-&gt;5)-beta-D-galactofuranosyl-(1-&gt;4)-alpha-L-rhamnosyl-(1-&gt;3)-N-acetyl-alpha-D-glucosaminyl-diphospho-trans,octa-cis-decaprenol + 28 UDP-alpha-D-galactofuranose = [beta-D-galactofuranosyl-(1-&gt;5)-beta-D-galactofuranosyl-(1-&gt;6)]14-beta-D-galactofuranosyl-(1-&gt;5)-beta-D-galactofuranosyl-(1-&gt;4)-alpha-L-rhamnopyranosyl-(1-&gt;3)-N-acetyl-alpha-D-glucosaminyl-diphospho-trans,octa-cis-decaprenol + 28 UDP + 28 H(+). The protein operates within cell wall biogenesis; cell wall polysaccharide biosynthesis. Involved in the galactan polymerization of the arabinogalactan (AG) region of the mycolylarabinogalactan-peptidoglycan (mAGP) complex, an essential component of the mycobacteria cell wall. Thus, successively transfers approximately 28 galactofuranosyl (Galf) residues from UDP-galactofuranose (UDP-Galf) onto the galactofuranosyl-galactofuranosyl-rhamnosyl-GlcNAc-diphospho-decaprenol (Galf-Galf-Rha-GlcNAc-PP-C50) acceptor produced by GlfT1, with alternating 1-&gt;5 and 1-&gt;6 links, forming a galactan domain with approximately 30 galactofuranosyl residues. The sequence is that of Galactofuranosyltransferase GlfT2 from Mycobacterium tuberculosis (strain ATCC 25618 / H37Rv).